The sequence spans 256 residues: Ubiquinone/menaquinone biosynthesis C-methyltransferase UbiE (256 aa).

A compositionally biased stretch (basic and acidic residues) spans 1-12 (MNDQRKGDHAEP). The disordered stretch occupies residues 1 to 22 (MNDQRKGDHAEPTTHFGYQDVP). S-adenosyl-L-methionine-binding positions include T79, D100, and 128 to 129 (DA).

It belongs to the class I-like SAM-binding methyltransferase superfamily. MenG/UbiE family.

It carries out the reaction a 2-demethylmenaquinol + S-adenosyl-L-methionine = a menaquinol + S-adenosyl-L-homocysteine + H(+). The enzyme catalyses a 2-methoxy-6-(all-trans-polyprenyl)benzene-1,4-diol + S-adenosyl-L-methionine = a 5-methoxy-2-methyl-3-(all-trans-polyprenyl)benzene-1,4-diol + S-adenosyl-L-homocysteine + H(+). It functions in the pathway quinol/quinone metabolism; menaquinone biosynthesis; menaquinol from 1,4-dihydroxy-2-naphthoate: step 2/2. Its pathway is cofactor biosynthesis; ubiquinone biosynthesis. Functionally, methyltransferase required for the conversion of demethylmenaquinol (DMKH2) to menaquinol (MKH2) and the conversion of 2-polyprenyl-6-methoxy-1,4-benzoquinol (DDMQH2) to 2-polyprenyl-3-methyl-6-methoxy-1,4-benzoquinol (DMQH2). This Pseudomonas putida (Arthrobacter siderocapsulatus) protein is Ubiquinone/menaquinone biosynthesis C-methyltransferase UbiE.